A 401-amino-acid polypeptide reads, in one-letter code: MAATDRLNQTSDILSQSMKKTDSSMSVVTAENPYKVSVVGSGNWGTTIAKVVAENTKEKPELFQERVDMWVFEEQIDGTPLAQIINTKHQNVKYLPNIDLPDNLVANPDLIATTKDADVIVFNVPHQFLGRIVAQMKGQIKPTARAVSCLKGFEVGPKGVQLLSDYVTQELGIECGALSGANLAPEVAKEHWSETTVAYHIPDDFKGDGKDIDHRVLKQLFHRPYFHVNVIDDVAGISIAGALKNVVALGCGFVTGLGWGNNAAAAIQRVGLGEIIKFGRMFFPESKVETYYQESAGVADLITTCSGGRNVRVATEMAKTGKSGEQVEKDILNGQSAQGLVTCKEVHQWLESSGNTEDFPLFEAVYQITYENVPMKELPSMIEELDIDSTSKCVLSYKMGL.

NAD(+)-binding positions include 40–45 (GSGNWG), Phe-128, Lys-151, and Ala-184. Residue Lys-151 coordinates substrate. Lys-244 acts as the Proton acceptor in catalysis. NAD(+) contacts are provided by Arg-309 and Gln-338. 309 to 310 (RN) serves as a coordination point for substrate.

It belongs to the NAD-dependent glycerol-3-phosphate dehydrogenase family.

The protein resides in the cytoplasm. The catalysed reaction is sn-glycerol 3-phosphate + NAD(+) = dihydroxyacetone phosphate + NADH + H(+). The sequence is that of Glycerol-3-phosphate dehydrogenase [NAD(+)] 1 (GPD1) from Zygosaccharomyces rouxii.